The sequence spans 447 residues: MSRRYFGTDGVRGRANATLTADLALRVGMAAGLIFQRGEYRHRVVIGKDTRLSGYMIENALVAGFTSVGMDVLLLGPVPTPAVGMLTRSMRADLGVMISASHNPFDDNGIKLFGPDGFKLSDEVEREIEELIDEDIAKRLAKPAEIGRAKRLEGVHARYIEYAKRTLPRDQTFDGIRVVVDCANGAGYKVAPEALWELGADVVSIGVEPDGMNINRDVGSTSPAALSAKVREVRADIGIALDGDADRVIIVDEKGHVVDGDQLMAVVAESFKEDGRLARSGLVATVMSNLGLERHLAGEGISLARTAVGDRYVLERMRADGYNVGGEQSGHIILSDYSTTGDGLVAALQVLAVVARRGKPVSEVCHRFDPLPQILKNVRYASGRPLEDEKVKIVIADAERRLANHGRLLIRPSGTEPVIRVMGEGDDRDLVENVVDDVIDVLQKVAA.

The Phosphoserine intermediate role is filled by Ser-101. Positions 101, 242, 244, and 246 each coordinate Mg(2+). The residue at position 101 (Ser-101) is a Phosphoserine.

The protein belongs to the phosphohexose mutase family. Mg(2+) is required as a cofactor. Activated by phosphorylation.

It catalyses the reaction alpha-D-glucosamine 1-phosphate = D-glucosamine 6-phosphate. In terms of biological role, catalyzes the conversion of glucosamine-6-phosphate to glucosamine-1-phosphate. In Xanthobacter autotrophicus (strain ATCC BAA-1158 / Py2), this protein is Phosphoglucosamine mutase.